A 199-amino-acid polypeptide reads, in one-letter code: Acireductone dioxygenase 2 (199 aa).

4 residues coordinate Fe(2+): His98, His100, Glu104, and His143. Residues His98, His100, Glu104, and His143 each contribute to the Ni(2+) site.

It belongs to the acireductone dioxygenase (ARD) family. Requires Fe(2+) as cofactor. Ni(2+) serves as cofactor.

The protein localises to the cytoplasm. It is found in the nucleus. The enzyme catalyses 1,2-dihydroxy-5-(methylsulfanyl)pent-1-en-3-one + O2 = 4-methylsulfanyl-2-oxobutanoate + formate + 2 H(+). It catalyses the reaction 1,2-dihydroxy-5-(methylsulfanyl)pent-1-en-3-one + O2 = 3-(methylsulfanyl)propanoate + CO + formate + 2 H(+). The protein operates within amino-acid biosynthesis; L-methionine biosynthesis via salvage pathway; L-methionine from S-methyl-5-thio-alpha-D-ribose 1-phosphate: step 5/6. Functionally, catalyzes 2 different reactions between oxygen and the acireductone 1,2-dihydroxy-3-keto-5-methylthiopentene (DHK-MTPene) depending upon the metal bound in the active site. Fe-containing acireductone dioxygenase (Fe-ARD) produces formate and 2-keto-4-methylthiobutyrate (KMTB), the alpha-ketoacid precursor of methionine in the methionine recycle pathway. Ni-containing acireductone dioxygenase (Ni-ARD) produces methylthiopropionate, carbon monoxide and formate, and does not lie on the methionine recycle pathway. In Vitis vinifera (Grape), this protein is Acireductone dioxygenase 2.